The chain runs to 385 residues: A-type ATP synthase subunit C (385 aa).

The protein belongs to the V-ATPase V0D/AC39 subunit family. In terms of assembly, has multiple subunits with at least A(3), B(3), C, D, E, F, H, I and proteolipid K(x).

It localises to the cell membrane. In terms of biological role, component of the A-type ATP synthase that produces ATP from ADP in the presence of a proton gradient across the membrane. The chain is A-type ATP synthase subunit C from Methanothermobacter thermautotrophicus (strain ATCC 29096 / DSM 1053 / JCM 10044 / NBRC 100330 / Delta H) (Methanobacterium thermoautotrophicum).